A 357-amino-acid chain; its full sequence is MEKGMNVLHDFGIQSTHYLQVNYQDSQDWFILVSVIADLRNAFYVLFPIWFHLREAVGIKLLWVAVIGDWLNLVFKWILFGQRPYWWVMDTDYYSNASVPLIKQFPVTCETGPGSPSGHAMGTAGVYYVMVTSTLSMFRGKKKPTYRFRCLNVILWLGFWAVQLNVCLSRIYLAAHFPHQVVAGVLSGIAVAETFRHIQSIYNASLKKYFFITFFLLSFAIGFYLLLKGLGVDLLWTLEKARRWCERPEWVHIDTTPFASLLKNVGTLFGLGLALNSSMYRESCKGTLSKWFPFRLSCIVVSLILLHLFDSLKPPSQIELIFYVLSFCKSAAVPLASVSLIPYCLARVLGQPDKKSL.

At 1-28 (MEKGMNVLHDFGIQSTHYLQVNYQDSQD) the chain is on the lumenal side. Residues 29-49 (WFILVSVIADLRNAFYVLFPI) traverse the membrane as a helical segment. The Cytoplasmic portion of the chain corresponds to 50-60 (WFHLREAVGIK). A helical transmembrane segment spans residues 61 to 81 (LLWVAVIGDWLNLVFKWILFG). Topologically, residues 82–117 (QRPYWWVMDTDYYSNASVPLIKQFPVTCETGPGSPS) are lumenal. Position 83 (arginine 83) interacts with substrate. A glycan (N-linked (GlcNAc...) asparagine) is linked at asparagine 96. The chain crosses the membrane as a helical span at residues 118–138 (GHAMGTAGVYYVMVTSTLSMF). The active-site Proton donor is the histidine 119. At 139-147 (RGKKKPTYR) the chain is on the cytoplasmic side. Residues 148-168 (FRCLNVILWLGFWAVQLNVCL) traverse the membrane as a helical segment. Residues 169–170 (SR) lie on the Lumenal side of the membrane. Position 170 (arginine 170) interacts with substrate. A helical membrane pass occupies residues 171 to 191 (IYLAAHFPHQVVAGVLSGIAV). The active-site Nucleophile is the histidine 176. The Cytoplasmic portion of the chain corresponds to 192–209 (AETFRHIQSIYNASLKKY). The helical transmembrane segment at 210–230 (FFITFFLLSFAIGFYLLLKGL) threads the bilayer. Over 231–254 (GVDLLWTLEKARRWCERPEWVHID) the chain is Lumenal. Residues 255–275 (TTPFASLLKNVGTLFGLGLAL) traverse the membrane as a helical segment. At 276-291 (NSSMYRESCKGTLSKW) the chain is on the cytoplasmic side. A helical membrane pass occupies residues 292-312 (FPFRLSCIVVSLILLHLFDSL). Residues 313 to 320 (KPPSQIEL) lie on the Lumenal side of the membrane. Residues 321-341 (IFYVLSFCKSAAVPLASVSLI) form a helical membrane-spanning segment. Residues 342–357 (PYCLARVLGQPDKKSL) lie on the Cytoplasmic side of the membrane. The Prevents secretion from ER signature appears at 354–357 (KKSL).

It belongs to the glucose-6-phosphatase family.

The protein localises to the endoplasmic reticulum membrane. The enzyme catalyses D-glucose 6-phosphate + H2O = D-glucose + phosphate. It functions in the pathway carbohydrate biosynthesis; gluconeogenesis. In terms of biological role, hydrolyzes glucose-6-phosphate to glucose in the endoplasmic reticulum. Forms with the glucose-6-phosphate transporter (SLC37A4/G6PT) the complex responsible for glucose production in the terminal step of glycogenolysis and gluconeogenesis. Hence, it is the key enzyme in homeostatic regulation of blood glucose levels. The chain is Glucose-6-phosphatase catalytic subunit 1 (G6PC1) from Felis catus (Cat).